A 149-amino-acid chain; its full sequence is Evolved beta-galactosidase subunit beta (149 aa).

In terms of assembly, heterooctamer of 4 alpha and 4 beta subunits.

Its function is as follows. Required for full activity of the EbgA enzyme. Exact function not known. The protein is Evolved beta-galactosidase subunit beta (ebgC) of Escherichia coli O6:H1 (strain CFT073 / ATCC 700928 / UPEC).